The primary structure comprises 439 residues: Tol-Pal system protein TolB (439 aa).

The N-terminal stretch at 1 to 22 (MKKPLRWLAALTVLLLPLSALA) is a signal peptide.

The protein belongs to the TolB family. As to quaternary structure, the Tol-Pal system is composed of five core proteins: the inner membrane proteins TolA, TolQ and TolR, the periplasmic protein TolB and the outer membrane protein Pal. They form a network linking the inner and outer membranes and the peptidoglycan layer.

It is found in the periplasm. In terms of biological role, part of the Tol-Pal system, which plays a role in outer membrane invagination during cell division and is important for maintaining outer membrane integrity. The sequence is that of Tol-Pal system protein TolB from Xanthomonas oryzae pv. oryzae (strain KACC10331 / KXO85).